A 599-amino-acid chain; its full sequence is Sulfite reductase [NADPH] flavoprotein alpha-component (599 aa).

Residues 64 to 202 enclose the Flavodoxin-like domain; it reads ITIISASQTG…AASEWRARVV (139 aa). Residues 70–75, 117–120, and 153–162 each bind FMN; these read SQTGNA, STQG, and LGDSSYEFFC. The region spanning 234 to 448 is the FAD-binding FR-type domain; that stretch reads DAPLAASLSV…IEHNDNFRLP (215 aa). FAD contacts are provided by residues Thr-322, Ala-356, 386–389, 404–406, Tyr-410, and 419–422; these read RLYS, TVG, and GGAS. NADP(+) is bound by residues 519–520, 525–529, and Asp-561; these read SR and KIYVQ. Tyr-599 contacts FAD.

This sequence belongs to the NADPH-dependent sulphite reductase flavoprotein subunit CysJ family. The protein in the N-terminal section; belongs to the flavodoxin family. In the C-terminal section; belongs to the flavoprotein pyridine nucleotide cytochrome reductase family. In terms of assembly, alpha(8)-beta(8). The alpha component is a flavoprotein, the beta component is a hemoprotein. FAD serves as cofactor. FMN is required as a cofactor.

It carries out the reaction hydrogen sulfide + 3 NADP(+) + 3 H2O = sulfite + 3 NADPH + 4 H(+). Its pathway is sulfur metabolism; hydrogen sulfide biosynthesis; hydrogen sulfide from sulfite (NADPH route): step 1/1. In terms of biological role, component of the sulfite reductase complex that catalyzes the 6-electron reduction of sulfite to sulfide. This is one of several activities required for the biosynthesis of L-cysteine from sulfate. The flavoprotein component catalyzes the electron flow from NADPH -&gt; FAD -&gt; FMN to the hemoprotein component. The chain is Sulfite reductase [NADPH] flavoprotein alpha-component from Escherichia coli O6:K15:H31 (strain 536 / UPEC).